We begin with the raw amino-acid sequence, 123 residues long: Large ribosomal subunit protein uL18 (123 aa).

It belongs to the universal ribosomal protein uL18 family. As to quaternary structure, part of the 50S ribosomal subunit; part of the 5S rRNA/L5/L18/L25 subcomplex. Contacts the 5S and 23S rRNAs.

In terms of biological role, this is one of the proteins that bind and probably mediate the attachment of the 5S RNA into the large ribosomal subunit, where it forms part of the central protuberance. The chain is Large ribosomal subunit protein uL18 from Bifidobacterium longum (strain DJO10A).